A 307-amino-acid chain; its full sequence is Nucleotide-binding protein Sca_0414 (307 aa).

ATP is bound at residue 19-26; that stretch reads GMSGAGKS. GTP is bound at residue 70-73; sequence DLRG.

The protein belongs to the RapZ-like family.

Functionally, displays ATPase and GTPase activities. The polypeptide is Nucleotide-binding protein Sca_0414 (Staphylococcus carnosus (strain TM300)).